Consider the following 93-residue polypeptide: Pyrimidine/purine nucleoside phosphorylase (93 aa).

Belongs to the nucleoside phosphorylase PpnP family.

The catalysed reaction is a purine D-ribonucleoside + phosphate = a purine nucleobase + alpha-D-ribose 1-phosphate. The enzyme catalyses adenosine + phosphate = alpha-D-ribose 1-phosphate + adenine. It catalyses the reaction cytidine + phosphate = cytosine + alpha-D-ribose 1-phosphate. It carries out the reaction guanosine + phosphate = alpha-D-ribose 1-phosphate + guanine. The catalysed reaction is inosine + phosphate = alpha-D-ribose 1-phosphate + hypoxanthine. The enzyme catalyses thymidine + phosphate = 2-deoxy-alpha-D-ribose 1-phosphate + thymine. It catalyses the reaction uridine + phosphate = alpha-D-ribose 1-phosphate + uracil. It carries out the reaction xanthosine + phosphate = alpha-D-ribose 1-phosphate + xanthine. In terms of biological role, catalyzes the phosphorolysis of diverse nucleosides, yielding D-ribose 1-phosphate and the respective free bases. Can use uridine, adenosine, guanosine, cytidine, thymidine, inosine and xanthosine as substrates. Also catalyzes the reverse reactions. The polypeptide is Pyrimidine/purine nucleoside phosphorylase (Pseudomonas syringae pv. tomato (strain ATCC BAA-871 / DC3000)).